A 474-amino-acid chain; its full sequence is Gamma-aminobutyric acid receptor subunit beta-1 (474 aa).

Residues 1-25 form the signal peptide; the sequence is MWTVQNRESLGLLSFPVMIAMVCCA. Residues 26-245 are Extracellular-facing; that stretch reads HSANEPSNMS…SFRLKRNIGY (220 aa). N-linked (GlcNAc...) asparagine glycans are attached at residues Asn-33 and Asn-105. Tyr-122 is a histamine binding site. The cysteines at positions 161 and 175 are disulfide-linked. Asn-174 carries an N-linked (GlcNAc...) asparagine glycan. Histamine-binding positions include 181-182 and Thr-227; that span reads SY. Tyr-182 and Thr-227 together coordinate 4-aminobutanoate. The next 3 membrane-spanning stretches (helical) occupy residues 246-267, 271-293, and 305-327; these read FILQ…SFWI, ASAA…STHL, and AIDI…YAFV. Over 328–451 the chain is Cytoplasmic; the sequence is NYIFFGKGPQ…DLTDVNSIDK (124 aa). The helical transmembrane segment at 452–473 threads the bilayer; it reads WSRMFFPITFSLFNVVYWLYYV.

This sequence belongs to the ligand-gated ion channel (TC 1.A.9) family. Gamma-aminobutyric acid receptor (TC 1.A.9.5) subfamily. GABRB1 sub-subfamily. In terms of assembly, heteropentamer, formed by a combination of alpha (GABRA1-6), beta (GABRB1-3), gamma (GABRG1-3), delta (GABRD), epsilon (GABRE), rho (GABRR1-3), pi (GABRP) and theta (GABRQ) chains, each subunit exhibiting distinct physiological and pharmacological properties. Binds UBQLN1.

It localises to the postsynaptic cell membrane. The protein localises to the cell membrane. The catalysed reaction is chloride(in) = chloride(out). Its activity is regulated as follows. Potentiated by histamine. In terms of biological role, beta subunit of the heteropentameric ligand-gated chloride channel gated by gamma-aminobutyric acid (GABA), a major inhibitory neurotransmitter in the brain. GABA-gated chloride channels, also named GABA(A) receptors (GABAAR), consist of five subunits arranged around a central pore and contain GABA active binding site(s) located at the alpha and beta subunit interface(s). When activated by GABA, GABAARs selectively allow the flow of chloride anions across the cell membrane down their electrochemical gradient. Chloride influx into the postsynaptic neuron following GABAAR opening decreases the neuron ability to generate a new action potential, thereby reducing nerve transmission. Beta-containing GABAARs can simultaneously bind GABA and histamine where histamine binds at the interface of two neighboring beta subunits, which may be involved in the regulation of sleep and wakefulness. This Bos taurus (Bovine) protein is Gamma-aminobutyric acid receptor subunit beta-1 (GABRB1).